A 628-amino-acid polypeptide reads, in one-letter code: DNA mismatch repair protein MutL (628 aa).

A disordered region spans residues 335–411; the sequence is SVDIEPESEQ…ASRNSEVSLP (77 aa). The segment covering 343–353 has biased composition (polar residues); it reads EQTTAWQTSPT.

Belongs to the DNA mismatch repair MutL/HexB family.

In terms of biological role, this protein is involved in the repair of mismatches in DNA. It is required for dam-dependent methyl-directed DNA mismatch repair. May act as a 'molecular matchmaker', a protein that promotes the formation of a stable complex between two or more DNA-binding proteins in an ATP-dependent manner without itself being part of a final effector complex. The chain is DNA mismatch repair protein MutL from Shewanella pealeana (strain ATCC 700345 / ANG-SQ1).